Here is a 351-residue protein sequence, read N- to C-terminus: MKNKKRVLIASSLSCAILLLSAATTQANSAHKDSQDQNKKEHVDKSQQKDKRNVTNKDKNSTVPDDIGKNGKITKRTETVYDEKTNILQNLQFDFIDDPTYDKNVLLVKKQGSIHSNLKFESHKEEKNSNWLKYPSEYHVDFQVKRNRKTEILDQLPKNKISTAKVDSTFSYSSGGKFDSTKGIGRTSSNSYSKTISYNQQNYDTIASGKNNNWHVHWSVIANDLKYGGEVKNRNDELLFYRNTRIATVENPELSFASKYRYPALVRSGFNPEFLTYLSNEKSNEKTQFEVTYTRNQDILKNRPGIHYAPSILEKNKDGQRLIVTYEVDWKNKTVKVVDKYSDDNKPYKEG.

The first 27 residues, 1 to 27 (MKNKKRVLIASSLSCAILLLSAATTQA), serve as a signal peptide directing secretion. The segment at 29-71 (SAHKDSQDQNKKEHVDKSQQKDKRNVTNKDKNSTVPDDIGKNG) is disordered. The segment covering 30–60 (AHKDSQDQNKKEHVDKSQQKDKRNVTNKDKN) has biased composition (basic and acidic residues).

Belongs to the aerolysin family.

This is an uncharacterized protein from Staphylococcus aureus (strain Mu50 / ATCC 700699).